A 396-amino-acid polypeptide reads, in one-letter code: Ribosomal RNA large subunit methyltransferase I (396 aa).

One can recognise a PUA domain in the interval 2-81 (TVRLILAKGR…EVIDCAFFIR (80 aa)).

The protein belongs to the methyltransferase superfamily. RlmI family.

Its subcellular location is the cytoplasm. The enzyme catalyses cytidine(1962) in 23S rRNA + S-adenosyl-L-methionine = 5-methylcytidine(1962) in 23S rRNA + S-adenosyl-L-homocysteine + H(+). Functionally, specifically methylates the cytosine at position 1962 (m5C1962) of 23S rRNA. The sequence is that of Ribosomal RNA large subunit methyltransferase I from Yersinia pseudotuberculosis serotype O:1b (strain IP 31758).